The following is an 80-amino-acid chain: Defensin-like protein 2 (80 aa).

The first 29 residues, 1 to 29 (MAKFASIIVLLFVALVVFAAFEEPTMVEA), serve as a signal peptide directing secretion. A Pyrrolidone carboxylic acid modification is found at Gln30. Disulfide bonds link Cys33-Cys80, Cys44-Cys65, Cys50-Cys74, and Cys54-Cys76.

The protein belongs to the DEFL family.

Its subcellular location is the secreted. Possesses antifungal activity sensitive to inorganic cations. Induces potential changes in fungal membranes and increased K(+) efflux and Ca(2+) uptake. The chain is Defensin-like protein 2 (AFP2) from Raphanus sativus (Radish).